The primary structure comprises 93 residues: M-zodatoxin-Lt5a (93 aa).

An N-terminal signal peptide occupies residues 1–22 (MKYCVVILALLVALVCITESRS). The propeptide occupies 23 to 64 (TETGYAVAETLEDNDLDELQAYLEEIAEASEMEDFSNIEEAR). The short motif at 61 to 64 (EEAR) is the Processing quadruplet motif element. Leu92 bears the Leucine amide mark.

Post-translationally, cleavage of the propeptide depends on the processing quadruplet motif (XXXR, with at least one of X being E). In terms of tissue distribution, expressed by the venom gland.

It localises to the secreted. Functionally, has antimicrobial activity against. Gram-positive bacteria (A.globiformis VKM Ac-1112 (MIC=1.1 uM), and B.subtilis VKM B-501 (MIC=0.6 uM)), Gram-negative bacteria (E.coli DH5-alpha (MIC=0.6 uM), E.coli MH1 (MIC=0.6 uM), and P.aeruginosa PAO1 (MIC=18 uM)), and yeasts (P.pastoris GS115 (MIC&gt;37 uM), and S.cerevisiae Y190 (MIC&gt;37 uM)). Also has a moderate hemolytic activity against rabbit erythrocytes. Causes paralysis, but is not lethal when injected into insect (M.domestica) larvae. The chain is M-zodatoxin-Lt5a from Lachesana tarabaevi (Spider).